Reading from the N-terminus, the 705-residue chain is Elongation factor G (705 aa).

A tr-type G domain is found at 8–290; sequence HRYRNIGIMA…GVIHLLPSPA (283 aa). GTP contacts are provided by residues 17-24, 88-92, and 142-145; these read AHIDAGKT, DTPGH, and NKMD.

It belongs to the TRAFAC class translation factor GTPase superfamily. Classic translation factor GTPase family. EF-G/EF-2 subfamily.

Its subcellular location is the cytoplasm. Functionally, catalyzes the GTP-dependent ribosomal translocation step during translation elongation. During this step, the ribosome changes from the pre-translocational (PRE) to the post-translocational (POST) state as the newly formed A-site-bound peptidyl-tRNA and P-site-bound deacylated tRNA move to the P and E sites, respectively. Catalyzes the coordinated movement of the two tRNA molecules, the mRNA and conformational changes in the ribosome. This is Elongation factor G from Xylella fastidiosa (strain M23).